Consider the following 660-residue polypeptide: MNPDLRRERDSASFNPELLTHILDGSPEKTRRRREIENMILNDPDFQHEDLNFLTRSQRYEVAVRKSAIMVKKMREFGIADPDEIMWFKKLHLVNFVEPVGLNYSMFIPTLLNQGTTAQKEKWLLSSKGLQIIGTYAQTEMGHGTHLRGLETTATYDPETQEFILNSPTVTSIKWWPGGLGKTSNHAIVLAQLITKGKCYGLHAFIVPIREIGTHKPLPGITVGDIGPKFGYDEIDNGYLKMDNHRIPRENMLMKYAQVKPDGTYVKPLSNKLTYGTMVFVRSFLVGEAARALSKACTIAIRYSAVRHQSEIKPGEPEPQILDFQTQQYKLFPLLATAYAFQFVGAYMKETYHRINEGIGQGDLSELPELHALTAGLKAFTSWTANTGIEACRMACGGHGYSHCSGLPNIYVNFTPSCTFEGENTVMMLQTARFLMKSYDQVHSGKLVCGMVSYLNDLPSQRIQPQQVAVWPTMVDINSPESLTEAYKLRAARLVEIAAKNLQKEVIHRKSKEVAWNLTSVDLVRASEAHCHYVVVKLFSEKLLKIQDKAIQAVLRSLCLLYSLYGISQNAGDFLQGSIMTEPQITQVNQRVKELLTLIRSDAVALVDAFDFQDVTLGSVLGRYDGNVYENLFEWAKNSPLNKAEVHESYKHLKSLQSKL.

The residue at position 26 (Ser-26) is a Phosphoserine. N6-succinyllysine occurs at positions 89 and 90. The FAD site is built by Thr-139 and Gly-178. An N6-acetyllysine modification is found at Lys-216. Lys-241 bears the N6-succinyllysine mark. N6-acetyllysine occurs at positions 255, 267, and 272. Lys-349 carries the N6-succinyllysine modification. Glu-421 functions as the Proton acceptor in the catalytic mechanism. 2 positions are modified to N6-acetyllysine; alternate: Lys-437 and Lys-446. Lys-437 and Lys-446 each carry N6-succinyllysine; alternate. N6-acetyllysine is present on residues Lys-500 and Lys-504. Lys-512 is modified (N6-acetyllysine; alternate). Position 512 is an N6-succinyllysine; alternate (Lys-512). Lys-542 carries the post-translational modification N6-succinyllysine. An N6-acetyllysine; alternate modification is found at Lys-637. The residue at position 637 (Lys-637) is an N6-succinyllysine; alternate. Lys-643 carries the N6-succinyllysine modification. Ser-649 is modified (phosphoserine). At Lys-651 the chain carries N6-acetyllysine. Lys-654 bears the N6-succinyllysine mark. Residues 658-660 carry the Microbody targeting signal motif; that stretch reads SKL.

The protein belongs to the acyl-CoA oxidase family. As to quaternary structure, homodimer. Interacts with LONP2. FAD serves as cofactor. Widely expressed with highest levels of isoform 1 and isoform 2 detected in testis. Isoform 1 is expressed at higher levels than isoform 2 in liver and kidney while isoform 2 levels are higher in brain, lung, muscle, white adipose tissue and testis. Levels are almost equal in heart.

The protein localises to the peroxisome. The catalysed reaction is a 2,3-saturated acyl-CoA + O2 = a (2E)-enoyl-CoA + H2O2. It catalyses the reaction hexadecanoyl-CoA + O2 = (2E)-hexadecenoyl-CoA + H2O2. The enzyme catalyses dodecanoyl-CoA + O2 = (2E)-dodecenoyl-CoA + H2O2. It carries out the reaction octanoyl-CoA + O2 = (2E)-octenoyl-CoA + H2O2. The catalysed reaction is decanoyl-CoA + O2 = (2E)-decenoyl-CoA + H2O2. It catalyses the reaction tetradecanoyl-CoA + O2 = (2E)-tetradecenoyl-CoA + H2O2. The enzyme catalyses hexadecanedioyl-CoA + O2 = (2E)-hexadecenedioyl-CoA + H2O2. It carries out the reaction (5Z,8Z,11Z,14Z,17Z)-eicosapentaenoyl-CoA + O2 = (2E,5Z,8Z,11Z,14Z,17Z)-icosahexaenoyl-CoA + H2O2. The catalysed reaction is tetracosanoyl-CoA + O2 = (2E)-tetracosenoyl-CoA + H2O2. It catalyses the reaction glutaryl-CoA + O2 = (2E)-glutaconyl-CoA + H2O2. The enzyme catalyses hexanoyl-CoA + O2 = (2E)-hexenoyl-CoA + H2O2. It carries out the reaction octadecanoyl-CoA + O2 = (2E)-octadecenoyl-CoA + H2O2. The catalysed reaction is (6Z,9Z,12Z,15Z,18Z,21Z)-tetracosahexaenoyl-CoA + O2 = (2E,6Z,9Z,12Z,15Z,18Z,21Z)-tetracosaheptaenoyl-CoA + H2O2. It participates in lipid metabolism; peroxisomal fatty acid beta-oxidation. In terms of biological role, involved in the initial and rate-limiting step of peroxisomal beta-oxidation of straight-chain saturated and unsaturated very-long-chain fatty acids. Catalyzes the desaturation of fatty acyl-CoAs such as palmitoyl-CoA (hexadecanoyl-CoA) to 2-trans-enoyl-CoAs ((2E)-enoyl-CoAs) such as (2E)-hexadecenoyl-CoA, and donates electrons directly to molecular oxygen (O(2)), thereby producing hydrogen peroxide (H(2)O(2)). Functionally, shows highest activity against medium-chain fatty acyl-CoAs. Shows optimum activity with a chain length of 10 carbons (decanoyl-CoA) in vitro. Its function is as follows. Is active against a much broader range of substrates and shows activity towards long-chain fatty acyl-CoAs. This chain is Peroxisomal acyl-coenzyme A oxidase 1, found in Homo sapiens (Human).